The following is an 80-amino-acid chain: Small ribosomal subunit protein bS18 (80 aa).

The protein belongs to the bacterial ribosomal protein bS18 family. Part of the 30S ribosomal subunit. Forms a tight heterodimer with protein bS6.

Functionally, binds as a heterodimer with protein bS6 to the central domain of the 16S rRNA, where it helps stabilize the platform of the 30S subunit. The sequence is that of Small ribosomal subunit protein bS18 from Staphylococcus haemolyticus (strain JCSC1435).